The following is a 409-amino-acid chain: Lysosome-associated membrane glycoprotein 1 (409 aa).

A signal peptide spans 1–25 (MAAPGGARRRPLLLLLFAGLVHGAS). Residues 26–187 (AVFVVKNGNG…SNFSREETRC (162 aa)) are first lumenal domain. The Lumenal segment spans residues 26–374 (AVFVVKNGNG…EECQLDENSM (349 aa)). N-linked (GlcNAc...) asparagine glycans are attached at residues Asn34, Asn59, Asn72, Asn80, Asn103, Asn117, Asn126, Asn146, Asn161, and Asn179. Cys38 and Cys76 are disulfide-bonded. Cys151 and Cys187 are joined by a disulfide. The disordered stretch occupies residues 180-207 (FSREETRCEQDLPTPTTPPQPAPTPAPA). The hinge stretch occupies residues 188-219 (EQDLPTPTTPPQPAPTPAPASPAVFRYNVSGS). Over residues 194-207 (PTTPPQPAPTPAPA) the composition is skewed to pro residues. 8 N-linked (GlcNAc...) asparagine glycosylation sites follow: Asn215, Asn220, Asn241, Asn253, Asn260, Asn285, Asn299, and Asn314. The interval 220-374 (NGTCLLASMG…EECQLDENSM (155 aa)) is second lumenal domain. Residues Cys223 and Cys261 are joined by a disulfide bond. An intrachain disulfide couples Cys330 to Cys367. A helical membrane pass occupies residues 375-398 (LIPIAVGGALAGLVLIVLLAYLIG). The Cytoplasmic segment spans residues 399–409 (RKRSHAGYQTI).

Belongs to the LAMP family. As to quaternary structure, interacts with ABCB9; this interaction strongly stabilizes ABCB9 and protects ABCB9 against lysosomal degradation. Interacts with FURIN. Interacts with TMEM175; inhibiting the proton channel activity of TMEM175. O- and N-glycosylated; some of the N-glycans attached to LAMP-1 are polylactosaminoglycans.

The protein resides in the lysosome membrane. Its subcellular location is the endosome membrane. It localises to the late endosome membrane. It is found in the cell membrane. The protein localises to the cytolytic granule membrane. Its function is as follows. Lysosomal membrane glycoprotein which plays an important role in lysosome biogenesis, lysosomal pH regulation, autophagy and cholesterol homeostasis. Acts as an important regulator of lysosomal lumen pH regulation by acting as a direct inhibitor of the proton channel TMEM175, facilitating lysosomal acidification for optimal hydrolase activity. Also plays an important role in NK-cells cytotoxicity. Mechanistically, participates in cytotoxic granule movement to the cell surface and perforin trafficking to the lytic granule. In addition, protects NK-cells from degranulation-associated damage induced by their own cytotoxic granule content. Presents carbohydrate ligands to selectins. In Bos taurus (Bovine), this protein is Lysosome-associated membrane glycoprotein 1 (LAMP1).